The chain runs to 346 residues: D-erythrose-4-phosphate dehydrogenase (346 aa).

Residue arginine 11 to isoleucine 12 participates in NAD(+) binding. Substrate contacts are provided by residues serine 163–threonine 165, arginine 209, threonine 222–lysine 223, and arginine 245. Cysteine 164 (nucleophile) is an active-site residue. Residue asparagine 327 participates in NAD(+) binding.

Belongs to the glyceraldehyde-3-phosphate dehydrogenase family. Epd subfamily. In terms of assembly, homotetramer.

It localises to the cytoplasm. The catalysed reaction is D-erythrose 4-phosphate + NAD(+) + H2O = 4-phospho-D-erythronate + NADH + 2 H(+). The protein operates within cofactor biosynthesis; pyridoxine 5'-phosphate biosynthesis; pyridoxine 5'-phosphate from D-erythrose 4-phosphate: step 1/5. Functionally, catalyzes the NAD-dependent conversion of D-erythrose 4-phosphate to 4-phosphoerythronate. The polypeptide is D-erythrose-4-phosphate dehydrogenase (Vibrio vulnificus (strain CMCP6)).